The chain runs to 267 residues: Hydroxynaphthalene reductase-like protein Arp2 (267 aa).

NADP(+) is bound by residues isoleucine 25, asparagine 45, aspartate 71, and asparagine 98. Active-site proton donor residues include serine 147 and serine 148. Positions 162, 166, 195, and 197 each coordinate NADP(+). Tyrosine 162 acts as the Proton acceptor in catalysis. The active-site Lowers pKa of active site Tyr is lysine 166.

It belongs to the short-chain dehydrogenases/reductases (SDR) family.

Hydroxynaphthalene reductase-like protein; part of the Pks2 gene cluster that mediates the formation of infectious structures (appressoria), enabling these fungi to kill insects faster. The product of the Pks2 gene cluster is different from the one of Pks1 and has still not been identified. In Metarhizium robertsii (strain ARSEF 23 / ATCC MYA-3075) (Metarhizium anisopliae (strain ARSEF 23)), this protein is Hydroxynaphthalene reductase-like protein Arp2.